The primary structure comprises 399 residues: Tyrosine--tRNA ligase (399 aa).

The short motif at 42 to 51 (PTAPDLHLGH) is the 'HIGH' region element. The 'KMSKS' region signature appears at 226 to 230 (KMSKS). Residue lysine 229 participates in ATP binding. In terms of domain architecture, S4 RNA-binding spans 337-398 (LPVFQVVKQA…GKRKFASVVL (62 aa)).

This sequence belongs to the class-I aminoacyl-tRNA synthetase family. TyrS type 2 subfamily. In terms of assembly, homodimer.

The protein resides in the cytoplasm. It carries out the reaction tRNA(Tyr) + L-tyrosine + ATP = L-tyrosyl-tRNA(Tyr) + AMP + diphosphate + H(+). Its function is as follows. Catalyzes the attachment of tyrosine to tRNA(Tyr) in a two-step reaction: tyrosine is first activated by ATP to form Tyr-AMP and then transferred to the acceptor end of tRNA(Tyr). This is Tyrosine--tRNA ligase from Aromatoleum aromaticum (strain DSM 19018 / LMG 30748 / EbN1) (Azoarcus sp. (strain EbN1)).